Reading from the N-terminus, the 459-residue chain is MTLPGHPTGMARPRGAGPCSPGLERAPRRSVGELRLLFEARCAAVAAAAAAGEPRARGAKRRGGQVPNGLPRAAPAPVIPQLTVTSEEDVAPASPGPPDREGNWLPAAGSHLQQPRRLSTSSLSSTGSSSLLEDSEDDLLSDSESRSRGNVQLETSEDVGQKSHWQKIRTMVNLPVMSPFKKRYSWVQLAGHTGSFKAAGTSGLILKRSSEPEHYCLVRLMADVLRGCVPAFHGVVERDGESYLQLQDLLDGFDGPCVLDCKMGVRTYLEEELTKARERPKLRKDMYKKMLAVDPEAPTEEEHAQRAVTKPRYMQWREGISSSTTLGFRIEGIKKADGSCSTDFKTTRSREQVTRVFEEFMQGDAEVLKRYLNRLQQIRDTLEISDFFRRHEVIGSSLLFVHDHCHRAGVWLIDFGKTTPLPDGQILDHRRPWEEGNREDGYLLGLDNLIGILANLAER.

Positions 1 to 26 are disordered; it reads MTLPGHPTGMARPRGAGPCSPGLERA. Omega-N-methylarginine occurs at positions 35, 55, and 62. The tract at residues 49-164 is disordered; the sequence is AAAGEPRARG…TSEDVGQKSH (116 aa). Over residues 116-132 the composition is skewed to low complexity; sequence RRLSTSSLSSTGSSSLL. A phosphoserine mark is found at S135 and S195. ATP-binding positions include S195, K207, 247-249, and D260; that span reads QDL. 2 residues coordinate substrate: K262 and R283. The interval 285–293 is calmodulin-binding; the sequence is DMYKKMLAV. 310-317 lines the substrate pocket; the sequence is KPRYMQWR. ATP is bound by residues K334 and D414. K417 is a substrate binding site.

It belongs to the inositol phosphokinase (IPK) family.

The protein resides in the cytoplasm. Its subcellular location is the cytoskeleton. It catalyses the reaction 1D-myo-inositol 1,4,5-trisphosphate + ATP = 1D-myo-inositol 1,3,4,5-tetrakisphosphate + ADP + H(+). With respect to regulation, activated by calcium/calmodulin. Catalyzes the phosphorylation of 1D-myo-inositol 1,4,5-trisphosphate (InsP3) into 1D-myo-inositol 1,3,4,5-tetrakisphosphate and participates to the regulation of calcium homeostasis. The polypeptide is Inositol-trisphosphate 3-kinase A (Rattus norvegicus (Rat)).